The sequence spans 334 residues: Ornithine carbamoyltransferase (334 aa).

Residues 56-59, Q83, R107, and 134-137 contribute to the carbamoyl phosphate site; these read STRT and HPTQ. Residues N168, D232, and 236-237 contribute to the L-ornithine site; that span reads SM. Carbamoyl phosphate is bound by residues 274–275 and R320; that span reads CL.

It belongs to the aspartate/ornithine carbamoyltransferase superfamily. OTCase family.

Its subcellular location is the cytoplasm. It carries out the reaction carbamoyl phosphate + L-ornithine = L-citrulline + phosphate + H(+). The protein operates within amino-acid biosynthesis; L-arginine biosynthesis; L-arginine from L-ornithine and carbamoyl phosphate: step 1/3. In terms of biological role, reversibly catalyzes the transfer of the carbamoyl group from carbamoyl phosphate (CP) to the N(epsilon) atom of ornithine (ORN) to produce L-citrulline. This Shigella sonnei (strain Ss046) protein is Ornithine carbamoyltransferase.